Consider the following 358-residue polypeptide: tRNA-specific 2-thiouridylase MnmA (358 aa).

Residues 6-13 (AMSGGVDS) and L32 each bind ATP. The active-site Nucleophile is the C101. C101 and C193 are disulfide-bonded. Position 125 (G125) interacts with ATP. An interaction with tRNA region spans residues 143–145 (KDQ). Catalysis depends on C193, which acts as the Cysteine persulfide intermediate.

This sequence belongs to the MnmA/TRMU family.

It is found in the cytoplasm. It carries out the reaction S-sulfanyl-L-cysteinyl-[protein] + uridine(34) in tRNA + AH2 + ATP = 2-thiouridine(34) in tRNA + L-cysteinyl-[protein] + A + AMP + diphosphate + H(+). Its function is as follows. Catalyzes the 2-thiolation of uridine at the wobble position (U34) of tRNA, leading to the formation of s(2)U34. This Mycolicibacterium paratuberculosis (strain ATCC BAA-968 / K-10) (Mycobacterium paratuberculosis) protein is tRNA-specific 2-thiouridylase MnmA.